Reading from the N-terminus, the 283-residue chain is Acyl-coenzyme A diphosphatase FITM2 (283 aa).

Residues 1–11 (MSTRRSSTRAD) are compositionally biased toward low complexity. The segment at 1–21 (MSTRRSSTRADSTTKRPASPN) is disordered. Residues 1–39 (MSTRRSSTRADSTTKRPASPNSTPNAALGIFVAIARQIL) lie on the Cytoplasmic side of the membrane. A helical membrane pass occupies residues 40–60 (FIDARKVALFYLAFVTVLSFI). The Lumenal portion of the chain corresponds to 61–81 (ESRIELDSTYYLVQKHSVLNQ). Residues 82 to 102 (YGVKMGWFWTLVIVGPFIWFS) traverse the membrane as a helical segment. The Cytoplasmic segment spans residues 103–120 (SKAHNRRDRDQPIVDVCR). A helical membrane pass occupies residues 121–141 (LGVGTACWYFSVQFFHKVLAL). Topologically, residues 142–168 (TSMCDKGRTLTRAQCSEKEGVWTPGYD) are lumenal. The helical transmembrane segment at 169-189 (ISGHCFLMIYSILIITEEAIA) threads the bilayer. H172 is a catalytic residue. The Cytoplasmic segment spans residues 190–219 (YRHYQQVTDAVHQMDGDREEHDRLTRCIQY). The next 2 membrane-spanning stretches (helical) occupy residues 220–240 (FFVAMLFLHAFWFKQIIISVL) and 241–261 (YYHIFIEEILGAVAAVVCWFV). H243 is a catalytic residue. At 262–283 (TYRMLYPAGFLASPIRRTVGRK) the chain is on the cytoplasmic side.

Belongs to the FIT family. FIT2 subfamily.

It localises to the endoplasmic reticulum membrane. It carries out the reaction an acyl-CoA + H2O = an acyl-4'-phosphopantetheine + adenosine 3',5'-bisphosphate + 2 H(+). Functionally, fatty acyl-coenzyme A (CoA) diphosphatase that hydrolyzes fatty acyl-CoA to yield acyl-4'-phosphopantetheine and adenosine 3',5'-bisphosphate. Preferentially hydrolyzes unsaturated long-chain acyl-CoA substrates in the endoplasmic reticulum (ER) lumen. This catalytic activity is required for maintaining ER structure and for lipid droplets (LDs) biogenesis, which are lipid storage organelles involved in maintaining lipid and energy homeostasis. May directly bind to diacylglycerol (DAGs) and triacylglycerol, which is also important for LD biogenesis. May support directional budding of nacent LDs from the ER into the cytosol by reducing DAG levels at sites of LD formation. May play a role in the regulation of cell morphology, ER morphology and cytoskeletal organization. The sequence is that of Acyl-coenzyme A diphosphatase FITM2 from Caenorhabditis elegans.